Reading from the N-terminus, the 410-residue chain is MENKRIDTIESALEDIGQGKLVIVIDDEERENEGDFIAAADKVTTEMINFITKEARGLLCVAVTMDRAKELQLEPMVQRNTSQHETNFTVSVDAIAEGVTTGISVYDRAMTIKMLGDETSHADSFSRPGHIFPLRAMDGGVLRRVGHTEAAVDLARLAGCSPVGLLCEILHEDGSMARLADLMTIKEKFGLKLITIKDLVAFQMRRSKLVQRAVESNIPTAYGEFRLMAYESFTDQQNHMAFVKGDVSTDEPVLVRVHSQCATGDTFASLRCDCGNQLASALRMIEKEGRGVLVYLMQEGRGIGLINKLKAYNLQDDGFDTVEANEELGFKADLRDYGIGAQILQDLGVRKMRLMTNNPKKVVGLEGYGLEIVERVPLEIEPNAVNKTYLETKRDKMGHMISCSCGSGNH.

The interval 1-205 (MENKRIDTIE…IKDLVAFQMR (205 aa)) is DHBP synthase. Residues 30–31 (RE), D35, 144–148 (RVGHT), and E168 contribute to the D-ribulose 5-phosphate site. E31 serves as a coordination point for Mg(2+). Residue H147 coordinates Mg(2+). The interval 206 to 410 (RSKLVQRAVE…ISCSCGSGNH (205 aa)) is GTP cyclohydrolase II. Residue 256–260 (RVHSQ) participates in GTP binding. C261, C272, and C274 together coordinate Zn(2+). GTP-binding positions include Q277, 299–301 (EGR), and T321. The active-site Proton acceptor; for GTP cyclohydrolase activity is D333. R335 (nucleophile; for GTP cyclohydrolase activity) is an active-site residue. 2 residues coordinate GTP: T356 and K361.

The protein in the N-terminal section; belongs to the DHBP synthase family. This sequence in the C-terminal section; belongs to the GTP cyclohydrolase II family. It depends on Mg(2+) as a cofactor. Mn(2+) serves as cofactor. The cofactor is Zn(2+).

It catalyses the reaction D-ribulose 5-phosphate = (2S)-2-hydroxy-3-oxobutyl phosphate + formate + H(+). The catalysed reaction is GTP + 4 H2O = 2,5-diamino-6-hydroxy-4-(5-phosphoribosylamino)-pyrimidine + formate + 2 phosphate + 3 H(+). The protein operates within cofactor biosynthesis; riboflavin biosynthesis; 2-hydroxy-3-oxobutyl phosphate from D-ribulose 5-phosphate: step 1/1. Its pathway is cofactor biosynthesis; riboflavin biosynthesis; 5-amino-6-(D-ribitylamino)uracil from GTP: step 1/4. Catalyzes the conversion of D-ribulose 5-phosphate to formate and 3,4-dihydroxy-2-butanone 4-phosphate. In terms of biological role, catalyzes the conversion of GTP to 2,5-diamino-6-ribosylamino-4(3H)-pyrimidinone 5'-phosphate (DARP), formate and pyrophosphate. This chain is Riboflavin biosynthesis protein RibBA, found in Chlorobium phaeovibrioides (strain DSM 265 / 1930) (Prosthecochloris vibrioformis (strain DSM 265)).